The following is a 477-amino-acid chain: MEWETVIGLEVHAQLATKSKIFSGASTAYGAAPNSQACAIDLGLPGVLPVLNREAVRMAVKFGLAIGAEISPRSVFARKNYFYPDLPKGYQISQYELPVVGLGKLEIELEDGETKVIGITRAHLEEDAGKSLHEDFHGMSGIDLNRAGTPLLEIVSEPDMRSAKEAVAYLKKLHALVRYLEICDGNMQEGSFRCDANVSVRRKGTEKFGTRAEIKNINSFRFVERAINYEVERQIDILEGGGAVVQETRLYDPDKGETRSMRSKEEANDYRYFPDPDLLPLEIDASFIEGVRGTLPELPDEKKHRFMTHYGLSAYDAGVLTASREMGDYYEAVVKACGGHAKLAANWVMGELSAALNKDNREITESPVSAAALGQMLERIEDNTISGKIAKDVFEAMWNGEGSADAVIEKKGLKQITDTGAIEAIIDKVMADNPGQLEQYRSGKDKLFGFFVGQVMKATGGKANPGQVNDLLKKKLQ.

This sequence belongs to the GatB/GatE family. GatB subfamily. As to quaternary structure, heterotrimer of A, B and C subunits.

The enzyme catalyses L-glutamyl-tRNA(Gln) + L-glutamine + ATP + H2O = L-glutaminyl-tRNA(Gln) + L-glutamate + ADP + phosphate + H(+). It catalyses the reaction L-aspartyl-tRNA(Asn) + L-glutamine + ATP + H2O = L-asparaginyl-tRNA(Asn) + L-glutamate + ADP + phosphate + 2 H(+). Allows the formation of correctly charged Asn-tRNA(Asn) or Gln-tRNA(Gln) through the transamidation of misacylated Asp-tRNA(Asn) or Glu-tRNA(Gln) in organisms which lack either or both of asparaginyl-tRNA or glutaminyl-tRNA synthetases. The reaction takes place in the presence of glutamine and ATP through an activated phospho-Asp-tRNA(Asn) or phospho-Glu-tRNA(Gln). The chain is Aspartyl/glutamyl-tRNA(Asn/Gln) amidotransferase subunit B from Thioalkalivibrio sulfidiphilus (strain HL-EbGR7).